A 78-amino-acid chain; its full sequence is Probable [Fe-S]-dependent transcriptional repressor (78 aa).

Residues Cys-56, Cys-61, Cys-64, and Cys-70 each coordinate iron-sulfur cluster.

The protein belongs to the FeoC family.

May function as a transcriptional regulator that controls feoABC expression. This is Probable [Fe-S]-dependent transcriptional repressor from Salmonella agona (strain SL483).